Here is a 668-residue protein sequence, read N- to C-terminus: DNA ligase (668 aa).

NAD(+)-binding positions include 31 to 35 (DAEYD), 80 to 81 (SL), and glutamate 112. Lysine 114 serves as the catalytic N6-AMP-lysine intermediate. Residues arginine 135, glutamate 172, lysine 289, and lysine 313 each coordinate NAD(+). Cysteine 407, cysteine 410, cysteine 425, and cysteine 431 together coordinate Zn(2+). A BRCT domain is found at 591–668 (SVPQPLAGKV…NEEQLIELLN (78 aa)).

The protein belongs to the NAD-dependent DNA ligase family. LigA subfamily. It depends on Mg(2+) as a cofactor. Mn(2+) serves as cofactor.

The catalysed reaction is NAD(+) + (deoxyribonucleotide)n-3'-hydroxyl + 5'-phospho-(deoxyribonucleotide)m = (deoxyribonucleotide)n+m + AMP + beta-nicotinamide D-nucleotide.. Functionally, DNA ligase that catalyzes the formation of phosphodiester linkages between 5'-phosphoryl and 3'-hydroxyl groups in double-stranded DNA using NAD as a coenzyme and as the energy source for the reaction. It is essential for DNA replication and repair of damaged DNA. This Aliivibrio fischeri (strain ATCC 700601 / ES114) (Vibrio fischeri) protein is DNA ligase.